The following is a 399-amino-acid chain: uncharacterized protein (399 aa).

Positions 375–399 are disordered; that stretch reads AAGGHRGSHGKSEQAATVRVVDDRR.

The protein belongs to the mycobacterial PPE family.

This is an uncharacterized protein from Mycobacterium tuberculosis (strain CDC 1551 / Oshkosh).